The sequence spans 356 residues: Protein pelota homolog (356 aa).

This sequence belongs to the eukaryotic release factor 1 family. Pelota subfamily. Monomer. It depends on a divalent metal cation as a cofactor.

The protein localises to the cytoplasm. In terms of biological role, may function in recognizing stalled ribosomes, interact with stem-loop structures in stalled mRNA molecules, and effect endonucleolytic cleavage of the mRNA. May play a role in the release non-functional ribosomes and degradation of damaged mRNAs. Has endoribonuclease activity. The chain is Protein pelota homolog from Pyrococcus abyssi (strain GE5 / Orsay).